Here is a 281-residue protein sequence, read N- to C-terminus: CDAN1-interacting nuclease 1 (281 aa).

Thr114 carries the post-translational modification Phosphothreonine.

The protein resides in the nucleus. Its subcellular location is the cytoplasm. Plays a role in erythroid cell differentiation. The polypeptide is CDAN1-interacting nuclease 1 (Homo sapiens (Human)).